The primary structure comprises 86 residues: Molybdopterin synthase sulfur carrier subunit (86 aa).

Glycine 86 carries the 1-thioglycine; alternate modification. At glycine 86 the chain carries Glycyl adenylate; alternate.

Belongs to the MoaD family. MOCS2A subfamily. In terms of assembly, heterotetramer; composed of 2 small (mocs2s) and 2 large (mocs2l) subunits. Post-translationally, C-terminal thiocarboxylation occurs in 2 steps, it is first acyl-adenylated (-COAMP) via the hesA/moeB/thiF part of mocs3, then thiocarboxylated (-COSH) via the rhodanese domain of mocs3.

The protein localises to the cytoplasm. The protein operates within cofactor biosynthesis; molybdopterin biosynthesis. Acts as a sulfur carrier required for molybdopterin biosynthesis. Component of the molybdopterin synthase complex that catalyzes the conversion of precursor Z into molybdopterin by mediating the incorporation of 2 sulfur atoms into precursor Z to generate a dithiolene group. In the complex, serves as sulfur donor by being thiocarboxylated (-COSH) at its C-terminus by mocs3. After interaction with mocs2l, the sulfur is then transferred to precursor Z to form molybdopterin. The sequence is that of Molybdopterin synthase sulfur carrier subunit (mocs2s) from Dictyostelium discoideum (Social amoeba).